The sequence spans 698 residues: Protein SST2 (698 aa).

The tract at residues 10–203 (ELSSKNFSRT…GAKPNVWSPT (194 aa)) is fungal-DR. A Phosphoserine modification is found at Ser252. Residues 273–358 (SNAGIRLFEN…SRSSFFTLSK (86 aa)) form the DEP domain. Position 408 is a phosphoserine (Ser408). The 270-residue stretch at 420-689 (KLDYVLTDPG…TQSDVYKDAS (270 aa)) folds into the RGS domain. Ser539 bears the Phosphoserine; by MAPK mark. The segment at 545-586 (FPTNLYDPSPASAESAASSISSTEADTLGEPPEVSLKPSKNL) is disordered. Positions 551-570 (DPSPASAESAASSISSTEAD) are enriched in low complexity. The residue at position 587 (Ser587) is a Phosphoserine.

Post-translationally, phosphorylated by FUS3 and KSS1.

In terms of biological role, desensitization to alpha-factor pheromone. Is involved in regulating the signaling pathway for responding to mating pheromone. This chain is Protein SST2 (SST2), found in Saccharomyces cerevisiae (strain ATCC 204508 / S288c) (Baker's yeast).